A 382-amino-acid polypeptide reads, in one-letter code: Protein-arginine rhamnosyltransferase (382 aa).

Residue 18-19 (FG) coordinates dTDP. The Proton acceptor role is filled by Asp-20. DTDP-beta-L-rhamnose is bound by residues Asp-20, Tyr-187, 250–252 (VPQ), and 268–272 (RGEDS). DTDP is bound by residues Tyr-187, 250 to 252 (VPQ), and 268 to 272 (RGEDS). Glu-270 is an active-site residue.

Belongs to the glycosyltransferase 104 family.

It catalyses the reaction dTDP-beta-L-rhamnose + L-arginyl-[protein] = N(omega)-(alpha-L-rhamnosyl)-L-arginyl-[protein] + dTDP + H(+). Functionally, protein-arginine rhamnosyltransferase that catalyzes the transfer of a single rhamnose to elongation factor P (EF-P) on 'Lys-32', a modification required for EF-P-dependent rescue of polyproline stalled ribosomes. The protein is Protein-arginine rhamnosyltransferase of Neisseria meningitidis serogroup B / serotype 15 (strain H44/76).